The chain runs to 473 residues: MKILYSLRRFYHVETLFNGTFVLAGRDQETTGFAWWAGNARLINLSGKLLGAHVAHAGLIVFWAGAMNLFEVAHFVPEKPMYEQGLILLPHLATLGWGVGPGGEVLDTFPYFVSGVLHLISSAVLGFGGIYHALLGPETLEESFPFFGYVWKDRNKMTTILGIHLILLGLGAFLLVLKALYFGGVYDTWAPGGGDVRKITNLTLSPGVIFGYLLKSPFGGEGWIVSVDDLEDIIGGHVWLGSICVLGGIWHILTKPFAWARRAFVWSGEAYLSYSLGALSVFGFIACCFVWFNNTAYPSEFYGPTGPEASQAQAFTFLVRDQRLGANVGSAQGPTGLGKYLMRSPTGEVIFGGETMRFWDLRAPWLEPLRGPNGLDLSRLKKDIQPWQERRSAEYMTHAPLGSLNSVGGVATEINAVNYVSPRSWLATSHFVLGFFFFVGHLWHAGRARAAAAGFEKGIDRDLEPVLYMTPLN.

A propeptide spanning residues 1–14 is cleaved from the precursor; it reads MKILYSLRRFYHVE. T15 bears the N-acetylthreonine mark. T15 is subject to Phosphothreonine. 5 helical membrane-spanning segments follow: residues 69 to 93, 134 to 155, 178 to 200, 255 to 275, and 291 to 312; these read LFEV…PHLA, LLGP…KDRN, KALY…RKIT, KPFA…LSYS, and WFNN…ASQA. Residue E367 coordinates [CaMn4O5] cluster. The chain crosses the membrane as a helical span at residues 447-471; that stretch reads RARAAAAGFEKGIDRDLEPVLYMTP.

It belongs to the PsbB/PsbC family. PsbC subfamily. In terms of assembly, PSII is composed of 1 copy each of membrane proteins PsbA, PsbB, PsbC, PsbD, PsbE, PsbF, PsbH, PsbI, PsbJ, PsbK, PsbL, PsbM, PsbT, PsbX, PsbY, PsbZ, Psb30/Ycf12, at least 3 peripheral proteins of the oxygen-evolving complex and a large number of cofactors. It forms dimeric complexes. Requires Binds multiple chlorophylls and provides some of the ligands for the Ca-4Mn-5O cluster of the oxygen-evolving complex. It may also provide a ligand for a Cl- that is required for oxygen evolution. PSII binds additional chlorophylls, carotenoids and specific lipids. as cofactor.

It is found in the plastid. The protein resides in the chloroplast thylakoid membrane. In terms of biological role, one of the components of the core complex of photosystem II (PSII). It binds chlorophyll and helps catalyze the primary light-induced photochemical processes of PSII. PSII is a light-driven water:plastoquinone oxidoreductase, using light energy to abstract electrons from H(2)O, generating O(2) and a proton gradient subsequently used for ATP formation. The polypeptide is Photosystem II CP43 reaction center protein (Sorghum bicolor (Sorghum)).